Here is a 763-residue protein sequence, read N- to C-terminus: G protein-regulated inducer of neurite outgrowth 3 (763 aa).

Disordered stretches follow at residues 1–48 (MGTV…IGNV), 65–111 (QACV…APGL), and 192–268 (ENSQ…GATC). A compositionally biased stretch (polar residues) spans 27-44 (ESQSVSPQPAQPDNNASG). The segment covering 93–104 (KTPDDFLLHGSK) has biased composition (basic and acidic residues). Polar residues predominate over residues 237-250 (ENKQPSATALNTTA). Phosphoserine occurs at positions 323 and 359. Disordered regions lie at residues 420–452 (TSSQNTETEEDLRLSASKEATSRQPEGTNPDFQ), 471–624 (NQGL…PRRG), and 711–737 (VKTQSGQTRRSISSDSSSSKKLKGRQH). The span at 437-450 (KEATSRQPEGTNPD) shows a compositional bias: polar residues. Basic and acidic residues-rich tracts occupy residues 480 to 496 (REPEIVVKTAKDHKAES) and 518 to 539 (PTDKKGAKDKKPASPLIVKDHA). The span at 593 to 609 (SLSLPSDGTGDSSPGSG) shows a compositional bias: low complexity.

Its function is as follows. May be involved in neurite outgrowth. This Mus musculus (Mouse) protein is G protein-regulated inducer of neurite outgrowth 3 (Gprin3).